Here is a 177-residue protein sequence, read N- to C-terminus: Apoptosis regulatory protein Siva (177 aa).

At Y34 the chain carries Phosphotyrosine; by ABL2. The tract at residues 36–55 (REVFERTKQLLFQGAQAYRD) is interaction with BCL2L1 isoform Bcl-x(L) and inhibition of BCL2L1 anti-apoptotic activity.

As to quaternary structure, binds through its N-terminal region to the C-terminus of CD27 and to PXMP2/PMP22. Binds to the C-terminus of TNFRSF18/GITR. Binds to BCL2L1/BCLX isoform Bcl-x(L) but not to BAX. Zn(2+) is required as a cofactor. In terms of tissue distribution, in post-ischemic kidney, found in cells lining the S3 segment of proximal tubules at 12 hours and 1 day post-ischemia. At five and seven days post-ischemia, found in epithelial cells of papillary proliferations in regenerating tubules.

The protein localises to the cytoplasm. It is found in the nucleus. Induces CD27-mediated apoptosis. Inhibits BCL2L1 isoform Bcl-x(L) anti-apoptotic activity. Inhibits activation of NF-kappa-B and promotes T-cell receptor-mediated apoptosis. This chain is Apoptosis regulatory protein Siva (Siva1), found in Rattus norvegicus (Rat).